Consider the following 360-residue polypeptide: MINLFLFCRAGYEKDCAAEIQVRAAELDIGGFVKTNTNDAYVIFQCFQAGDAEVLAKNISLDSLIFARQMFAAKELLKGLPEQDRISPIVEALTQVNKAGELRVETPDTNEAKERSNFCRKFTVPLRQALKKSGALLEKENPKRPIIHVCFVASGQAYVGYSLSNNSSPYFMGIPRLKIAADAPSRSTLKLDEAFIHFIPKEEQETRLSSGMKAVDLGACPGGWTYQLVRRGMFVAAVDNGPMDQGLMDTGQVKHYQADGFRFEPPRKNITWLVCDMIEKPSRVAELIEAWAINGWFKESIFNLKLPMKARYKEVSTILATMEEILKENGVDDFSIAAKHLYHDRDEVTVHLCLRPSQPW.

Residues Ser-187, 220-223 (CPGG), Asp-239, Asp-259, and Asp-276 each bind S-adenosyl-L-methionine. Lys-305 (proton acceptor) is an active-site residue.

This sequence belongs to the class I-like SAM-binding methyltransferase superfamily. RNA methyltransferase RlmE family. RlmM subfamily. As to quaternary structure, monomer.

Its subcellular location is the cytoplasm. It carries out the reaction cytidine(2498) in 23S rRNA + S-adenosyl-L-methionine = 2'-O-methylcytidine(2498) in 23S rRNA + S-adenosyl-L-homocysteine + H(+). In terms of biological role, catalyzes the 2'-O-methylation at nucleotide C2498 in 23S rRNA. In Shewanella pealeana (strain ATCC 700345 / ANG-SQ1), this protein is Ribosomal RNA large subunit methyltransferase M.